A 265-amino-acid chain; its full sequence is Catechol O-methyltransferase (265 aa).

The Cytoplasmic portion of the chain corresponds to 1–2 (ML). Residues 3-19 (LAAVSLGLLLLAFLLLL) form a helical; Signal-anchor for type II membrane protein membrane-spanning segment. The Extracellular segment spans residues 20–265 (RHLGWGLVAI…QGPGSSPVKS (246 aa)). S-adenosyl-L-methionine-binding positions include V85, E107, S115, E133, I134, 160–163 (GASQ), S162, and D184. D184 is a Mg(2+) binding site. K187 lines the substrate pocket. The Mg(2+) site is built by D212 and N213. Residues N213 and E242 each contribute to the substrate site. Phosphoserine is present on residues S260, S261, and S265.

This sequence belongs to the class I-like SAM-binding methyltransferase superfamily. Cation-dependent O-methyltransferase family. The cofactor is Mg(2+).

The protein resides in the cytoplasm. Its subcellular location is the cell membrane. It carries out the reaction a catechol + S-adenosyl-L-methionine = a guaiacol + S-adenosyl-L-homocysteine + H(+). The catalysed reaction is 2-hydroxyestrone + S-adenosyl-L-methionine = 2-hydroxy-3-methoxy-estrone + S-adenosyl-L-homocysteine + H(+). It catalyses the reaction 4-hydroxyestrone + S-adenosyl-L-methionine = 4-methoxyestrone + S-adenosyl-L-homocysteine + H(+). The enzyme catalyses 2-hydroxyestrone + S-adenosyl-L-methionine = 2-methoxyestrone + S-adenosyl-L-homocysteine + H(+). It carries out the reaction 4-hydroxy-17beta-estradiol + S-adenosyl-L-methionine = 4-methoxy-17beta-estradiol + S-adenosyl-L-homocysteine + H(+). The catalysed reaction is 2-hydroxy-17beta-estradiol + S-adenosyl-L-methionine = 2-hydroxy-3-methoxy-17beta-estradiol + S-adenosyl-L-homocysteine + H(+). It catalyses the reaction 2-hydroxy-17beta-estradiol + S-adenosyl-L-methionine = 2-methoxy-17beta-estradiol + S-adenosyl-L-homocysteine + H(+). In terms of biological role, catalyzes the O-methylation, and thereby the inactivation, of catecholamine neurotransmitters and catechol hormones. Also shortens the biological half-lives of certain neuroactive drugs, like L-DOPA, alpha-methyl DOPA and isoproterenol. The polypeptide is Catechol O-methyltransferase (Mus musculus (Mouse)).